Reading from the N-terminus, the 396-residue chain is Elongation factor Tu 2 (396 aa).

Residues 10–206 (KPHVNVGTIG…AIDSYIPEPE (197 aa)) enclose the tr-type G domain. The interval 19–26 (GHIDHGKT) is G1. 19–26 (GHIDHGKT) is a binding site for GTP. Thr26 is a binding site for Mg(2+). A G2 region spans residues 60–64 (GITIA). Residues 81–84 (DCPG) are G3. GTP contacts are provided by residues 81–85 (DCPGH) and 136–139 (NKCD). A G4 region spans residues 136-139 (NKCD). The interval 174-176 (SAL) is G5.

The protein belongs to the TRAFAC class translation factor GTPase superfamily. Classic translation factor GTPase family. EF-Tu/EF-1A subfamily. In terms of assembly, monomer.

It is found in the cytoplasm. It carries out the reaction GTP + H2O = GDP + phosphate + H(+). Its function is as follows. GTP hydrolase that promotes the GTP-dependent binding of aminoacyl-tRNA to the A-site of ribosomes during protein biosynthesis. This is Elongation factor Tu 2 from Desulfotalea psychrophila (strain LSv54 / DSM 12343).